The primary structure comprises 259 residues: Small ribosomal subunit protein uS2 (259 aa).

It belongs to the universal ribosomal protein uS2 family.

The chain is Small ribosomal subunit protein uS2 from Streptococcus pneumoniae (strain CGSP14).